The following is a 283-amino-acid chain: Pantothenate synthetase (283 aa).

30-37 (MGNLHDGH) contacts ATP. His37 acts as the Proton donor in catalysis. Gln61 provides a ligand contact to (R)-pantoate. Gln61 provides a ligand contact to beta-alanine. Position 149-152 (149-152 (GEKD)) interacts with ATP. Gln155 is a binding site for (R)-pantoate. ATP is bound by residues Met178 and 186 to 189 (LSSR).

The protein belongs to the pantothenate synthetase family. As to quaternary structure, homodimer.

The protein resides in the cytoplasm. It carries out the reaction (R)-pantoate + beta-alanine + ATP = (R)-pantothenate + AMP + diphosphate + H(+). The protein operates within cofactor biosynthesis; (R)-pantothenate biosynthesis; (R)-pantothenate from (R)-pantoate and beta-alanine: step 1/1. Activation requires a combination of a divalent cation, magnesium or manganese, and a monovalent cation, potassium or ammonium. Above the optimum concentration for activation, magnesium and manganese are rather inhibitory. Also activated by 2-mercaptoethanol, dithiothreitol, cysteine and glutathione. Inhibited by divalent cations (mercury, cobalt, zinc, copper, silver), chelating agents (EDTA, EGTA and o-phenanthroline), and analogs of beta-alanine (taurine, gamma-aminobutyrate, gamma-amino-beta-hydroxybutyrate). Catalyzes the condensation of pantoate with beta-alanine in an ATP-dependent reaction via a pantoyl-adenylate intermediate. The protein is Pantothenate synthetase (panC) of Escherichia coli (strain K12).